Reading from the N-terminus, the 354-residue chain is Endo-1,4-beta-xylanase 1 (354 aa).

Residues 19-339 (SGLDAAMKAA…KPSYTSSLNT (321 aa)) enclose the GH10 domain. N117 is a glycosylation site (N-linked (GlcNAc...) asparagine). The Proton donor role is filled by E147. E261 serves as the catalytic Nucleophile. Residues C289 and C295 are joined by a disulfide bond.

This sequence belongs to the glycosyl hydrolase 10 (cellulase F) family.

Its subcellular location is the secreted. It catalyses the reaction Endohydrolysis of (1-&gt;4)-beta-D-xylosidic linkages in xylans.. It participates in glycan degradation; xylan degradation. In terms of biological role, endo-1,4-beta-xylanase involved in the hydrolysis of xylan, a major structural heterogeneous polysaccharide found in plant biomass representing the second most abundant polysaccharide in the biosphere, after cellulose. Plays an important role in causing fusarium head blight (FHB) on cereal crops. The sequence is that of Endo-1,4-beta-xylanase 1 (XYL1) from Gibberella zeae (strain ATCC MYA-4620 / CBS 123657 / FGSC 9075 / NRRL 31084 / PH-1) (Wheat head blight fungus).